Consider the following 271-residue polypeptide: Type III pantothenate kinase (271 aa).

ATP is bound at residue 6–13; sequence DVRNTNIV. Residue 109 to 112 coordinates substrate; sequence GADR. The Proton acceptor role is filled by aspartate 111. Aspartate 131 contacts K(+). Position 134 (threonine 134) interacts with ATP. Residue threonine 186 participates in substrate binding.

This sequence belongs to the type III pantothenate kinase family. As to quaternary structure, homodimer. Requires NH4(+) as cofactor. K(+) serves as cofactor.

The protein resides in the cytoplasm. The catalysed reaction is (R)-pantothenate + ATP = (R)-4'-phosphopantothenate + ADP + H(+). The protein operates within cofactor biosynthesis; coenzyme A biosynthesis; CoA from (R)-pantothenate: step 1/5. Catalyzes the phosphorylation of pantothenate (Pan), the first step in CoA biosynthesis. The protein is Type III pantothenate kinase of Rhodococcus jostii (strain RHA1).